Consider the following 489-residue polypeptide: Phosphoglucosamine mutase (489 aa).

The Phosphoserine intermediate role is filled by Ser136. Ser136, Asp275, Asp277, and Asp279 together coordinate Mg(2+). The residue at position 136 (Ser136) is a Phosphoserine.

It belongs to the phosphohexose mutase family. Mg(2+) is required as a cofactor. Post-translationally, activated by phosphorylation.

It catalyses the reaction alpha-D-glucosamine 1-phosphate = D-glucosamine 6-phosphate. In terms of biological role, catalyzes the conversion of glucosamine-6-phosphate to glucosamine-1-phosphate. This chain is Phosphoglucosamine mutase, found in Trichodesmium erythraeum (strain IMS101).